A 223-amino-acid chain; its full sequence is Ribose-5-phosphate isomerase A (223 aa).

Residues 26 to 29 (TGST), 82 to 85 (DGAD), and 95 to 98 (KGGG) each bind substrate. E104 serves as the catalytic Proton acceptor. K122 is a substrate binding site.

Belongs to the ribose 5-phosphate isomerase family. In terms of assembly, homodimer.

The catalysed reaction is aldehydo-D-ribose 5-phosphate = D-ribulose 5-phosphate. Its pathway is carbohydrate degradation; pentose phosphate pathway; D-ribose 5-phosphate from D-ribulose 5-phosphate (non-oxidative stage): step 1/1. Catalyzes the reversible conversion of ribose-5-phosphate to ribulose 5-phosphate. The chain is Ribose-5-phosphate isomerase A from Streptococcus agalactiae serotype III (strain NEM316).